We begin with the raw amino-acid sequence, 186 residues long: MKIAQELRVGNVFMIGGDPMVVQKAEYNKSGRNAAVVKMKYKNLLTDAPGESVFKADDKFEVVVLERRECTYSYFADPMYVFMDADYNQYEVEKDSMGDSLNYLEDGMNVEVVFYNDKAISVEMPTTLVREIVYTEPAVKGDTSSGKVLKGAKINTGFELQVPLFCNIGDKIEIDTRTGEYRSRAN.

It belongs to the elongation factor P family.

The protein localises to the cytoplasm. Its pathway is protein biosynthesis; polypeptide chain elongation. In terms of biological role, involved in peptide bond synthesis. Stimulates efficient translation and peptide-bond synthesis on native or reconstituted 70S ribosomes in vitro. Probably functions indirectly by altering the affinity of the ribosome for aminoacyl-tRNA, thus increasing their reactivity as acceptors for peptidyl transferase. This Cupriavidus necator (strain ATCC 17699 / DSM 428 / KCTC 22496 / NCIMB 10442 / H16 / Stanier 337) (Ralstonia eutropha) protein is Elongation factor P.